We begin with the raw amino-acid sequence, 378 residues long: Ribosomal RNA large subunit methyltransferase G (378 aa).

The protein belongs to the methyltransferase superfamily. RlmG family.

It is found in the cytoplasm. It catalyses the reaction guanosine(1835) in 23S rRNA + S-adenosyl-L-methionine = N(2)-methylguanosine(1835) in 23S rRNA + S-adenosyl-L-homocysteine + H(+). In terms of biological role, specifically methylates the guanine in position 1835 (m2G1835) of 23S rRNA. This is Ribosomal RNA large subunit methyltransferase G from Escherichia coli (strain ATCC 8739 / DSM 1576 / NBRC 3972 / NCIMB 8545 / WDCM 00012 / Crooks).